Consider the following 156-residue polypeptide: Cell division protein SepF (156 aa).

The interval 15–58 (SDVVPEDEDDEVIDEEPESSFDTDRSVTPIPAASTQPSTSQRKS) is disordered. The span at 18-35 (VPEDEDDEVIDEEPESSF) shows a compositional bias: acidic residues. Residues 47–57 (ASTQPSTSQRK) are compositionally biased toward polar residues.

It belongs to the SepF family. As to quaternary structure, homodimer. Interacts with FtsZ.

Its subcellular location is the cytoplasm. Its function is as follows. Cell division protein that is part of the divisome complex and is recruited early to the Z-ring. Probably stimulates Z-ring formation, perhaps through the cross-linking of FtsZ protofilaments. Its function overlaps with FtsA. The chain is Cell division protein SepF from Bifidobacterium animalis subsp. lactis (strain AD011).